A 2144-amino-acid chain; its full sequence is Reducing polyketide synthase PKS2 (2144 aa).

The Ketosynthase family 3 (KS3) domain maps to 10–436 (PMPLAIIGMS…GSNSHCIVRA (427 aa)). Catalysis depends on for beta-ketoacyl synthase activity residues cysteine 183, histidine 319, and histidine 360. Residues 538 to 855 (VFAFTGQGAQ…VPSLHRGQNA (318 aa)) are malonyl-CoA:ACP transacylase (MAT). An N-terminal hotdog fold region spans residues 924–1058 (HDLLGSINSS…ALVKCEATTD (135 aa)). The dehydratase (DH) domain stretch occupies residues 924–1214 (HDLLGSINSS…RSYSIDGTTD (291 aa)). A PKS/mFAS DH domain is found at 924–1237 (HDLLGSINSS…LAVEATLAPQ (314 aa)). The segment at 1076-1237 (HSCVGSPLLY…LAVEATLAPQ (162 aa)) is C-terminal hotdog fold. Residues 1461–1747 (GMPDSLYLQR…SETDSKKLLL (287 aa)) are enoyl reductase (ER) domain. The ketoreductase (KR) domain stretch occupies residues 1771–1948 (AVYLLVGGSG…PATSLALTAV (178 aa)). In terms of domain architecture, Carrier spans 2059–2136 (EATQLLLAAI…KIVDSVIVKR (78 aa)). Residue serine 2096 is modified to O-(pantetheine 4'-phosphoryl)serine.

Its pathway is mycotoxin biosynthesis. In terms of biological role, reducing polyketide synthase (PKS); part of the Tox1A locus, one of the 2 loci that mediate the biosynthesis of T-toxin, a family of linear polyketides 37 to 45 carbons in length, of which the major component is 41 carbons, and which leads to high virulence to maize. One of the PKSs (PKS1 or PKS2) could synthesize a precursor, used subsequently by the other PKS as starter unit, to add additional carbons. Variability in the length of the final carbon backbone C35-47 could be achieved by varying the number of condensation cycles, or use of different starter or extender units or might be due to decarboxylation of the penultimate product, catalyzed by DEC1. Additional proteins are required for the biosynthesis of T-toxin, including oxidoreductases RED1, RED2, RED3, LAM1 and OXI1, as well as esterase TOX9. This chain is Reducing polyketide synthase PKS2, found in Cochliobolus heterostrophus (strain C4 / ATCC 48331 / race T) (Southern corn leaf blight fungus).